The primary structure comprises 368 residues: Molybdenum import ATP-binding protein ModC (368 aa).

Positions 1-230 (MTIKIQFKQT…HAMRPWQSFS (230 aa)) constitute an ABC transporter domain. ATP is bound at residue 32–39 (GRSGAGKT). Residues 291-362 (ATSIRNVLPA…VKGVSVTQRD (72 aa)) form the Mop domain.

This sequence belongs to the ABC transporter superfamily. Molybdate importer (TC 3.A.1.8) family. As to quaternary structure, the complex is composed of two ATP-binding proteins (ModC), two transmembrane proteins (ModB) and a solute-binding protein (ModA).

Its subcellular location is the cell inner membrane. It catalyses the reaction molybdate(out) + ATP + H2O = molybdate(in) + ADP + phosphate + H(+). Part of the ABC transporter complex ModABC involved in molybdenum import. Responsible for energy coupling to the transport system. This Vibrio parahaemolyticus serotype O3:K6 (strain RIMD 2210633) protein is Molybdenum import ATP-binding protein ModC.